We begin with the raw amino-acid sequence, 483 residues long: GTPase Der (483 aa).

EngA-type G domains follow at residues 3–167 (FTLA…GEER) and 212–387 (LRIA…EIWN). Residues 9-16 (GRPNVGKS), 56-60 (DTAGL), 119-122 (NKAE), 218-225 (GRPNAGKS), 265-269 (DTAGM), and 330-333 (NKWD) contribute to the GTP site. Residues 388 to 472 (RRISTGRLNR…PIRLSLRTSD (85 aa)) form the KH-like domain.

It belongs to the TRAFAC class TrmE-Era-EngA-EngB-Septin-like GTPase superfamily. EngA (Der) GTPase family. As to quaternary structure, associates with the 50S ribosomal subunit.

Its function is as follows. GTPase that plays an essential role in the late steps of ribosome biogenesis. The protein is GTPase Der of Brucella suis (strain ATCC 23445 / NCTC 10510).